The sequence spans 417 residues: D-amino acid dehydrogenase (417 aa).

Position 3 to 17 (3 to 17) interacts with FAD; the sequence is IIVLGAGVIGVTSAY.

Belongs to the DadA oxidoreductase family. The cofactor is FAD.

It carries out the reaction a D-alpha-amino acid + A + H2O = a 2-oxocarboxylate + AH2 + NH4(+). It participates in amino-acid degradation; D-alanine degradation; NH(3) and pyruvate from D-alanine: step 1/1. In terms of biological role, oxidative deamination of D-amino acids. In Azorhizobium caulinodans (strain ATCC 43989 / DSM 5975 / JCM 20966 / LMG 6465 / NBRC 14845 / NCIMB 13405 / ORS 571), this protein is D-amino acid dehydrogenase.